The chain runs to 153 residues: Cytochrome c-type biogenesis protein CcmE (153 aa).

Residues 1 to 7 (MKPRHKR) lie on the Cytoplasmic side of the membrane. Residues 8–28 (LAIAGGVLVAVGAIATLVLNA) form a helical; Signal-anchor for type II membrane protein membrane-spanning segment. Residues 29 to 153 (FQSNLVFFYS…SSQAATGDPR (125 aa)) are Periplasmic-facing. Heme is bound by residues histidine 120 and tyrosine 124. A disordered region spans residues 130 to 153 (AEALKRAKEGGQMQSSQAATGDPR). The span at 141–153 (QMQSSQAATGDPR) shows a compositional bias: polar residues.

Belongs to the CcmE/CycJ family.

Its subcellular location is the cell inner membrane. In terms of biological role, heme chaperone required for the biogenesis of c-type cytochromes. Transiently binds heme delivered by CcmC and transfers the heme to apo-cytochromes in a process facilitated by CcmF and CcmH. The polypeptide is Cytochrome c-type biogenesis protein CcmE (Leptothrix cholodnii (strain ATCC 51168 / LMG 8142 / SP-6) (Leptothrix discophora (strain SP-6))).